The following is a 121-amino-acid chain: Large ribosomal subunit protein bL20 (121 aa).

This sequence belongs to the bacterial ribosomal protein bL20 family.

Binds directly to 23S ribosomal RNA and is necessary for the in vitro assembly process of the 50S ribosomal subunit. It is not involved in the protein synthesizing functions of that subunit. The sequence is that of Large ribosomal subunit protein bL20 from Ruegeria sp. (strain TM1040) (Silicibacter sp.).